Reading from the N-terminus, the 687-residue chain is Mu-like prophage FluMu transposase A (687 aa).

Positions 8 to 74 (THYSVYELAN…ELLLKTTPEQ (67 aa)) constitute an HTH Mu-type domain. The H-T-H motif DNA-binding region spans 398–417 (PIERAFSHGGLGDYVDKHLL).

Its function is as follows. This transposase is essential for integration, replication-transposition, and excision of Mu-like viral DNA. The protein is Mu-like prophage FluMu transposase A of Haemophilus influenzae (strain ATCC 51907 / DSM 11121 / KW20 / Rd).